Here is a 289-residue protein sequence, read N- to C-terminus: MGPSSSLTTIVATVLLVTLFGSAYASNFFDEFDLTWGDHRGKIFNGGNMLSLSLDQVSGSGFKSKKEYLFGRIDMQLKLVAGNSAGTVTAYYLSSQGATHDEIDFEFLGNETGKPYVLHTNVFAQGKGDREQQFYLWFDPTKNFHTYSIVWRPQHIIFLVDNLPIRVFNNAEKLGVPFPKSQPMRIYSSLWNADDWATRGGLVKTDWSKAPFTAYYRGFNAAACTASSGCDPKFKSSFGDGKLQVATELNAYGRRRLRWVQKYFMIYNYCSDLKRFPRGFPPECKKSRV.

An N-terminal signal peptide occupies residues 1-25 (MGPSSSLTTIVATVLLVTLFGSAYA). The region spanning 26–216 (SNFFDEFDLT…WSKAPFTAYY (191 aa)) is the GH16 domain. The active-site Nucleophile is the Glu102. The active-site Proton donor is the Glu106. Residue Glu106 coordinates xyloglucan. The N-linked (GlcNAc...) asparagine glycan is linked to Asn110. Xyloglucan contacts are provided by residues 119–121 (HTN), 129–131 (DRE), 195–196 (DW), and Gly200. Intrachain disulfides connect Cys224-Cys230 and Cys270-Cys284. Residue Arg275 participates in xyloglucan binding.

It belongs to the glycosyl hydrolase 16 family. XTH group 2 subfamily. Post-translationally, contains at least one intrachain disulfide bond essential for its enzymatic activity. In terms of tissue distribution, strongly expressed in roots, hypocotyls and cotyledons. Aslo detected in inflorescence stems and in the carpels and styles in flowers.

The protein resides in the secreted. It is found in the cell wall. It localises to the extracellular space. Its subcellular location is the apoplast. It catalyses the reaction breaks a beta-(1-&gt;4) bond in the backbone of a xyloglucan and transfers the xyloglucanyl segment on to O-4 of the non-reducing terminal glucose residue of an acceptor, which can be a xyloglucan or an oligosaccharide of xyloglucan.. The enzyme catalyses xyloglucan + H2O = xyloglucan oligosaccharides.. Functionally, catalyzes xyloglucan endohydrolysis (XEH) and/or endotransglycosylation (XET). Cleaves and religates xyloglucan polymers, an essential constituent of the primary cell wall, and thereby participates in cell wall construction of growing tissues. Has a high XET activity, but little or no XEH activity in vitro. Acceptor preferences are XXXGol &gt; XLLGol = XLFGol &gt; XXLGol &gt; XXFGol. The chain is Xyloglucan endotransglucosylase/hydrolase protein 15 from Arabidopsis thaliana (Mouse-ear cress).